The sequence spans 171 residues: Myelin basic protein (171 aa).

N-acetylalanine is present on Ala-1. Ser-7 and Ser-12 each carry phosphoserine. Tyr-14 is subject to Phosphotyrosine. Thr-17 is subject to Phosphothreonine. Ser-19 carries the phosphoserine modification. A Phosphothreonine modification is found at Thr-20. Arg-25 and Arg-31 each carry citrulline. The residue at position 35 (Thr-35) is a Phosphothreonine. A Phosphoserine modification is found at Ser-40. 2 positions are modified to omega-N-methylarginine: Arg-43 and Arg-49. The segment at 44–115 is disordered; sequence FFGGDRGAPK…GRGLSLSRFS (72 aa). Position 56 is a phosphoserine (Ser-56). At Tyr-69 the chain carries Phosphotyrosine. Residue Ser-76 is modified to Phosphoserine. Thr-80, Thr-95, and Thr-98 each carry phosphothreonine. Residue Gln-103 is modified to Deamidated glutamine. Arg-107 carries the post-translational modification Omega-N-methylarginine; alternate. A Symmetric dimethylarginine; alternate modification is found at Arg-107. Phosphoserine is present on Ser-115. 2 positions are modified to citrulline: Arg-122 and Arg-130. Residue Gln-148 is modified to Deamidated glutamine. At Arg-160 the chain carries Citrulline. Ser-162 carries the phosphoserine modification. The residue at position 166 (Ser-166) is a Phosphoserine; by UHMK1. Arg-171 is modified (citrulline).

The protein belongs to the myelin basic protein family. Homodimer. In terms of processing, as in other animals, several charge isomers may be produced as a result of optional post-translational modifications, such as phosphorylation of serine or threonine residues, deamidation of glutamine or asparagine residues, citrullination and methylation of arginine residues. Post-translationally, phosphorylated by TAOK2, VRK2, MAPK11, MAPK12, MAPK14 and MINK1. Proteolytically cleaved in B cell lysosomes by cathepsin CTSG which degrades the major immunogenic MBP epitope and prevents the activation of MBP-specific autoreactive T cells.

The protein resides in the myelin membrane. Functionally, is, with PLP, the most abundant protein component of the myelin membrane in the CNS. Has a role in both the formation and stabilization of this compact multilayer arrangement of bilayers. Each splice variant and charge isomer may have a specialized function in the assembly of an optimized, biochemically functional myelin membrane. The sequence is that of Myelin basic protein (MBP) from Pan troglodytes (Chimpanzee).